Consider the following 135-residue polypeptide: Large ribosomal subunit protein uL16c (135 aa).

It belongs to the universal ribosomal protein uL16 family. Part of the 50S ribosomal subunit.

It is found in the plastid. Its subcellular location is the chloroplast. The polypeptide is Large ribosomal subunit protein uL16c (Olimarabidopsis pumila (Dwarf rocket)).